We begin with the raw amino-acid sequence, 715 residues long: Interferon-induced GTP-binding protein Mx2 (715 aa).

A Dynamin-type G domain is found at 115 to 387 (DLALPAIAVI…LIMHIQKSLP (273 aa)). Residues 125–132 (GDQSSGKS) form a G1 motif region. 125–132 (GDQSSGKS) contacts GTP. Residues 150 to 152 (VTR) form a G2 motif region. The tract at residues 225–228 (DLPG) is G3 motif. GTP-binding positions include 225–229 (DLPGI) and 294–297 (TKPD). Positions 294-297 (TKPD) are G4 motif. The tract at residues 326–329 (KCRG) is G5 motif. Residues 623-714 (FTEIGIHLNA…ALCQFSSKEI (92 aa)) form the GED domain.

This sequence belongs to the TRAFAC class dynamin-like GTPase superfamily. Dynamin/Fzo/YdjA family.

The protein resides in the cytoplasm. It localises to the nucleus. The protein localises to the nuclear pore complex. Its function is as follows. Interferon-induced dynamin-like GTPase with potent antiviral activity against human immunodeficiency virus type 1 (HIV-1). Acts by targeting the viral capsid and affects the nuclear uptake and/or stability of the HIV-1 replication complex and the subsequent chromosomal integration of the proviral DNA. Exhibits antiviral activity also against simian immunodeficiency virus (SIV-mnd). May play a role in regulating nucleocytoplasmic transport and cell-cycle progression. The chain is Interferon-induced GTP-binding protein Mx2 (MX2) from Homo sapiens (Human).